Consider the following 480-residue polypeptide: Nitrogenase molybdenum-iron protein alpha chain (480 aa).

Residues cysteine 58, cysteine 84, and cysteine 150 each contribute to the [8Fe-7S] cluster site. Cysteine 274 and histidine 441 together coordinate [7Fe-Mo-9S-C-homocitryl] cluster.

Belongs to the NifD/NifK/NifE/NifN family. Tetramer of two alpha and two beta chains. Forms complex with the iron protein (nitrogenase component 2). It depends on [8Fe-7S] cluster as a cofactor. [7Fe-Mo-9S-C-homocitryl] cluster is required as a cofactor.

It carries out the reaction N2 + 8 reduced [2Fe-2S]-[ferredoxin] + 16 ATP + 16 H2O = H2 + 8 oxidized [2Fe-2S]-[ferredoxin] + 2 NH4(+) + 16 ADP + 16 phosphate + 6 H(+). This molybdenum-iron protein is part of the nitrogenase complex that catalyzes the key enzymatic reactions in nitrogen fixation. The sequence is that of Nitrogenase molybdenum-iron protein alpha chain (nifD) from Crocosphaera subtropica (strain ATCC 51142 / BH68) (Cyanothece sp. (strain ATCC 51142)).